The chain runs to 148 residues: MKPRSKRLLLVAGAVALLVGAVALVLNAFQQNLVFFHTPTEVAEGKAPVGRAFRIGGMVETGSIRRAADGVTVQFAITDTAKVIPVSYKGSLPDLFSEGKGAVVQGTLGPDGQFQASEVLAKHDENYMPPEAQHAVDQAQKAAQTVQQ.

The Cytoplasmic portion of the chain corresponds to 1–7 (MKPRSKR). The helical; Signal-anchor for type II membrane protein transmembrane segment at 8–28 (LLLVAGAVALLVGAVALVLNA) threads the bilayer. Over 29-148 (FQQNLVFFHT…AQKAAQTVQQ (120 aa)) the chain is Periplasmic. Positions 123 and 127 each coordinate heme.

Belongs to the CcmE/CycJ family.

The protein localises to the cell inner membrane. Functionally, heme chaperone required for the biogenesis of c-type cytochromes. Transiently binds heme delivered by CcmC and transfers the heme to apo-cytochromes in a process facilitated by CcmF and CcmH. In Aromatoleum aromaticum (strain DSM 19018 / LMG 30748 / EbN1) (Azoarcus sp. (strain EbN1)), this protein is Cytochrome c-type biogenesis protein CcmE.